The sequence spans 224 residues: MKRRISIAIDGPAAAGKSTVAKRIAERLSYVYIDTGAMYRALTYRALACGVDIHDEQALLSLLRDTSIELKPSPHGQIVLVNGDDVTDIIRGEAVTNAVSLVAKHPLVREEMVARQRALAEGGGVVMDGRDIGTHVLPNAEVKIFLKASVEERARRRHEENLARGFPSDLEKLKEEIARRDRLDSERETAPLRKAPDAVEIDTTSLSVEEVVERIMEIVNERIG.

11-19 (GPAAAGKST) contacts ATP.

Belongs to the cytidylate kinase family. Type 1 subfamily.

Its subcellular location is the cytoplasm. The catalysed reaction is CMP + ATP = CDP + ADP. The enzyme catalyses dCMP + ATP = dCDP + ADP. The chain is Cytidylate kinase from Geobacillus kaustophilus (strain HTA426).